Consider the following 321-residue polypeptide: Phosphatidylglycerol phospholipase C (321 aa).

Positions 2 to 251 (VEIVGHRAFK…DDPIKARKLC (250 aa)) constitute a GP-PDE domain. A helical; Anchor for type IV membrane protein membrane pass occupies residues 297–315 (WVHIKLCGWSIAYVIFLFL).

The protein belongs to the glycerophosphoryl diester phosphodiesterase family.

It localises to the mitochondrion membrane. It is found in the lipid droplet. It catalyses the reaction a 1,2-diacyl-sn-glycero-3-phospho-(1'-sn-glycerol) + H2O = sn-glycerol 3-phosphate + a 1,2-diacyl-sn-glycerol + H(+). In terms of biological role, phosphatidylglycerol phospholipase required for the removal of excess phosphatidylglycerol (PG) via a phospholipase C-type degradation mechanism. This chain is Phosphatidylglycerol phospholipase C (PGC1), found in Saccharomyces cerevisiae (strain ATCC 204508 / S288c) (Baker's yeast).